The sequence spans 234 residues: 1-(5-phosphoribosyl)-5-[(5-phosphoribosylamino)methylideneamino] imidazole-4-carboxamide isomerase (234 aa).

The Proton acceptor role is filled by Asp9. The active-site Proton donor is Asp131.

It belongs to the HisA/HisF family.

The protein resides in the cytoplasm. The enzyme catalyses 1-(5-phospho-beta-D-ribosyl)-5-[(5-phospho-beta-D-ribosylamino)methylideneamino]imidazole-4-carboxamide = 5-[(5-phospho-1-deoxy-D-ribulos-1-ylimino)methylamino]-1-(5-phospho-beta-D-ribosyl)imidazole-4-carboxamide. Its pathway is amino-acid biosynthesis; L-histidine biosynthesis; L-histidine from 5-phospho-alpha-D-ribose 1-diphosphate: step 4/9. The chain is 1-(5-phosphoribosyl)-5-[(5-phosphoribosylamino)methylideneamino] imidazole-4-carboxamide isomerase from Staphylococcus aureus (strain NCTC 8325 / PS 47).